The sequence spans 328 residues: Ketol-acid reductoisomerase (NADP(+)) (328 aa).

The 181-residue stretch at 2–182 (AKIYRDVDAS…GATRAGVIET (181 aa)) folds into the KARI N-terminal Rossmann domain. NADP(+) contacts are provided by residues 25–28 (YGIQ), R48, S53, and 83–86 (DMEQ). H108 is an active-site residue. G134 lines the NADP(+) pocket. The KARI C-terminal knotted domain occupies 183–328 (TFAEETETDL…IEMRRLLFGQ (146 aa)). Mg(2+) is bound by residues D191, E195, E227, and E231. A substrate-binding site is contributed by S252.

It belongs to the ketol-acid reductoisomerase family. Requires Mg(2+) as cofactor.

The enzyme catalyses (2R)-2,3-dihydroxy-3-methylbutanoate + NADP(+) = (2S)-2-acetolactate + NADPH + H(+). It carries out the reaction (2R,3R)-2,3-dihydroxy-3-methylpentanoate + NADP(+) = (S)-2-ethyl-2-hydroxy-3-oxobutanoate + NADPH + H(+). It participates in amino-acid biosynthesis; L-isoleucine biosynthesis; L-isoleucine from 2-oxobutanoate: step 2/4. Its pathway is amino-acid biosynthesis; L-valine biosynthesis; L-valine from pyruvate: step 2/4. Involved in the biosynthesis of branched-chain amino acids (BCAA). Catalyzes an alkyl-migration followed by a ketol-acid reduction of (S)-2-acetolactate (S2AL) to yield (R)-2,3-dihydroxy-isovalerate. In the isomerase reaction, S2AL is rearranged via a Mg-dependent methyl migration to produce 3-hydroxy-3-methyl-2-ketobutyrate (HMKB). In the reductase reaction, this 2-ketoacid undergoes a metal-dependent reduction by NADPH to yield (R)-2,3-dihydroxy-isovalerate. In Pyrobaculum arsenaticum (strain DSM 13514 / JCM 11321 / PZ6), this protein is Ketol-acid reductoisomerase (NADP(+)).